The chain runs to 638 residues: 1-deoxy-D-xylulose-5-phosphate synthase (638 aa).

Residues H77 and 118-120 each bind thiamine diphosphate; that span reads AHA. D149 is a Mg(2+) binding site. Residues 150-151, N178, Y287, and E369 each bind thiamine diphosphate; that span reads GS. Residue N178 coordinates Mg(2+).

It belongs to the transketolase family. DXPS subfamily. Homodimer. The cofactor is Mg(2+). Thiamine diphosphate is required as a cofactor.

The catalysed reaction is D-glyceraldehyde 3-phosphate + pyruvate + H(+) = 1-deoxy-D-xylulose 5-phosphate + CO2. The protein operates within metabolic intermediate biosynthesis; 1-deoxy-D-xylulose 5-phosphate biosynthesis; 1-deoxy-D-xylulose 5-phosphate from D-glyceraldehyde 3-phosphate and pyruvate: step 1/1. Functionally, catalyzes the acyloin condensation reaction between C atoms 2 and 3 of pyruvate and glyceraldehyde 3-phosphate to yield 1-deoxy-D-xylulose-5-phosphate (DXP). The chain is 1-deoxy-D-xylulose-5-phosphate synthase from Phenylobacterium zucineum (strain HLK1).